The following is a 605-amino-acid chain: Elongation factor 4 (605 aa).

Positions 11-193 (KCIRNFSIIA…QIVTRISPPQ (183 aa)) constitute a tr-type G domain. GTP contacts are provided by residues 23–28 (DHGKST) and 140–143 (NKVD).

It belongs to the TRAFAC class translation factor GTPase superfamily. Classic translation factor GTPase family. LepA subfamily.

It is found in the cell membrane. The enzyme catalyses GTP + H2O = GDP + phosphate + H(+). Functionally, required for accurate and efficient protein synthesis under certain stress conditions. May act as a fidelity factor of the translation reaction, by catalyzing a one-codon backward translocation of tRNAs on improperly translocated ribosomes. Back-translocation proceeds from a post-translocation (POST) complex to a pre-translocation (PRE) complex, thus giving elongation factor G a second chance to translocate the tRNAs correctly. Binds to ribosomes in a GTP-dependent manner. The chain is Elongation factor 4 from Aster yellows witches'-broom phytoplasma (strain AYWB).